Here is a 520-residue protein sequence, read N- to C-terminus: Basal body-orientation factor 1 (520 aa).

The span at 1 to 21 shows a compositional bias: basic residues; it reads MPKKKGKGKGKGKGKGKGKKD. Positions 1–34 are disordered; the sequence is MPKKKGKGKGKGKGKGKGKKDGKHDSKADRESEI. Residues 22 to 34 show a composition bias toward basic and acidic residues; sequence GKHDSKADRESEI. Coiled coils occupy residues 27–175 and 245–386; these read KADR…REKM and VKEA…RQEA. The tract at residues 468-492 is disordered; sequence AHPPALSASSSEKIQVSSDAGSTVE. Residues 469–478 show a composition bias toward low complexity; sequence HPPALSASSS. Residues 479-492 show a composition bias toward polar residues; sequence EKIQVSSDAGSTVE.

Belongs to the BBOF1 family.

Its subcellular location is the cytoplasm. The protein resides in the cytoskeleton. The protein localises to the cilium basal body. Functionally, basal body protein required in multiciliate cells to align and maintain cilia orientation in response to flow. May act by mediating a maturation step that stabilizes and aligns cilia orientation. Not required to respond to planar cell polarity (PCP) or flow-based orientation cues. The chain is Basal body-orientation factor 1 from Danio rerio (Zebrafish).